Consider the following 359-residue polypeptide: Type-1 angiotensin II receptor (359 aa).

Residues 1 to 25 (MMLNSSTEDGIKRIQDDCPKAGRHN) are Extracellular-facing. N4 is a glycosylation site (N-linked (GlcNAc...) asparagine). Angiotensin II-binding residues include Q15 and D17. Cystine bridges form between C18/C274 and C101/C180. The chain crosses the membrane as a helical span at residues 26 to 55 (YIFVMIPTLYSIIFVVGIFGNSLAVIVIYF). Residues 56-61 (YMKLKT) lie on the Cytoplasmic side of the membrane. A helical transmembrane segment spans residues 62-89 (VASVFLLNLALADLCFLLTLPLWAVYTA). Topologically, residues 90–98 (MEYRWPFGN) are extracellular. The chain crosses the membrane as a helical span at residues 99-125 (YLCKIASASVSFNLYASVFLLTCLSID). Residues 126–141 (RYLAIVHPMKSRLRRT) are Cytoplasmic-facing. Residues 142 to 165 (MLVAKVTCIIIWLLAGLASLPAII) traverse the membrane as a helical segment. The Extracellular portion of the chain corresponds to 166 to 190 (HRNVFFIENTNITVCAFHYESQNST). R167 contacts angiotensin II. N-linked (GlcNAc...) asparagine glycosylation occurs at N176. Angiotensin II contacts are provided by F182, H183, and Y184. N-linked (GlcNAc...) asparagine glycosylation is present at N188. The chain crosses the membrane as a helical span at residues 191 to 216 (LPIGLGLTKNILGFLFPFLIILTSYT). K199 is an angiotensin II binding site. Topologically, residues 217–239 (LIWKALKKAYEIQKNKPRNDDIF) are cytoplasmic. The chain crosses the membrane as a helical span at residues 240–268 (KIIMAIVLFFFFSWVPHQIFTFLDVLIQL). Residues 269 to 278 (GVIHDCRIAD) lie on the Extracellular side of the membrane. The helical transmembrane segment at 279-304 (IVDTAMPITICIAYFNNCLNPLFYGF) threads the bilayer. Topologically, residues 305-359 (LGKKFKKYFLQLLKYIPPKAKSHSNLSTKMSTLSYRPSDNVSSSSKKPVPCFEVE) are cytoplasmic. Residues 335–350 (STLSYRPSDNVSSSSK) are compositionally biased toward polar residues. The tract at residues 335–359 (STLSYRPSDNVSSSSKKPVPCFEVE) is disordered. C355 carries S-palmitoyl cysteine lipidation.

This sequence belongs to the G-protein coupled receptor 1 family. As to quaternary structure, interacts with MAS1. Interacts with ARRB1. Interacts with FLNA (via filamin repeat 21); increases PKA-mediated phosphorylation of FLNA. Post-translationally, C-terminal Ser or Thr residues may be phosphorylated.

The protein resides in the cell membrane. Its function is as follows. Receptor for angiotensin II, a vasoconstricting peptide, which acts as a key regulator of blood pressure and sodium retention by the kidney. The activated receptor in turn couples to G-alpha proteins G(q) (GNAQ, GNA11, GNA14 or GNA15) and thus activates phospholipase C and increases the cytosolic Ca(2+) concentrations, which in turn triggers cellular responses such as stimulation of protein kinase C. In Oryctolagus cuniculus (Rabbit), this protein is Type-1 angiotensin II receptor (AGTR1).